The primary structure comprises 325 residues: Tetraacyldisaccharide 4'-kinase (325 aa).

53–60 is an ATP binding site; the sequence is SVGGNGKT.

It belongs to the LpxK family.

It catalyses the reaction a lipid A disaccharide + ATP = a lipid IVA + ADP + H(+). Its pathway is glycolipid biosynthesis; lipid IV(A) biosynthesis; lipid IV(A) from (3R)-3-hydroxytetradecanoyl-[acyl-carrier-protein] and UDP-N-acetyl-alpha-D-glucosamine: step 6/6. Its function is as follows. Transfers the gamma-phosphate of ATP to the 4'-position of a tetraacyldisaccharide 1-phosphate intermediate (termed DS-1-P) to form tetraacyldisaccharide 1,4'-bis-phosphate (lipid IVA). The protein is Tetraacyldisaccharide 4'-kinase of Actinobacillus succinogenes (strain ATCC 55618 / DSM 22257 / CCUG 43843 / 130Z).